Here is an 82-residue protein sequence, read N- to C-terminus: Sulfur carrier protein TusA (82 aa).

Cysteine 19 acts as the Cysteine persulfide intermediate in catalysis.

This sequence belongs to the sulfur carrier protein TusA family.

It is found in the cytoplasm. Functionally, sulfur carrier protein which probably makes part of a sulfur-relay system. This Vibrio campbellii (strain ATCC BAA-1116) protein is Sulfur carrier protein TusA.